The sequence spans 285 residues: Shikimate dehydrogenase (NADP(+)) (285 aa).

Shikimate-binding positions include 21–23 (SRS) and Thr-68. Catalysis depends on Lys-72, which acts as the Proton acceptor. Glu-83 contributes to the NADP(+) binding site. Residues Asn-92 and Asp-107 each contribute to the shikimate site. Residues 132–136 (GAGGS), 156–161 (NRTMER), and Leu-221 each bind NADP(+). Tyr-223 is a binding site for shikimate. Gly-244 contributes to the NADP(+) binding site.

This sequence belongs to the shikimate dehydrogenase family. Homodimer.

The enzyme catalyses shikimate + NADP(+) = 3-dehydroshikimate + NADPH + H(+). It participates in metabolic intermediate biosynthesis; chorismate biosynthesis; chorismate from D-erythrose 4-phosphate and phosphoenolpyruvate: step 4/7. In terms of biological role, involved in the biosynthesis of the chorismate, which leads to the biosynthesis of aromatic amino acids. Catalyzes the reversible NADPH linked reduction of 3-dehydroshikimate (DHSA) to yield shikimate (SA). The chain is Shikimate dehydrogenase (NADP(+)) from Nitrobacter hamburgensis (strain DSM 10229 / NCIMB 13809 / X14).